The chain runs to 390 residues: uncharacterized protein (390 aa).

The Glutaredoxin domain maps to 215–325 (SRFKRKTLGK…KLIKDCEMVE (111 aa)).

This is an uncharacterized protein from Arabidopsis thaliana (Mouse-ear cress).